Here is a 259-residue protein sequence, read N- to C-terminus: Ribonuclease HII (259 aa).

Residues 72–259 enclose the RNase H type-2 domain; it reads SYIAGIDEVG…PIKDMIKNKL (188 aa). A divalent metal cation is bound by residues Asp78, Glu79, and Asp170.

This sequence belongs to the RNase HII family. Mn(2+) serves as cofactor. The cofactor is Mg(2+).

The protein localises to the cytoplasm. It carries out the reaction Endonucleolytic cleavage to 5'-phosphomonoester.. Functionally, endonuclease that specifically degrades the RNA of RNA-DNA hybrids. In Bacillus cytotoxicus (strain DSM 22905 / CIP 110041 / 391-98 / NVH 391-98), this protein is Ribonuclease HII.